Consider the following 207-residue polypeptide: Protein phosphatase inhibitor 2 (207 aa).

3 disordered regions span residues 1 to 44 (MAAS…SKKS), 65 to 97 (LMKIDEPSTPYHSMVADDEDALSDSETTEALTP), and 110 to 146 (ESLEPKYRVREQESSGDEDSDLSPEEREKKRQFEMKR). Position 2 is an N-acetylalanine (Ala-2). A required for binding PPP1CC region spans residues 12 to 17 (KGILKN). Positions 19-28 (SSTTSSVVST) are enriched in low complexity. The span at 35–44 (SVDEELSKKS) shows a compositional bias: basic and acidic residues. A required for binding PPP1CC region spans residues 43–55 (KSQKWDEMSILAT). Ser-44 carries the phosphoserine; by ATM modification. Residue Thr-73 is modified to Phosphothreonine; by GSK3. A compositionally biased stretch (acidic residues) spans 80 to 91 (ADDEDALSDSET). Ser-87 and Ser-89 each carry phosphoserine. Thr-92 and Thr-96 each carry phosphothreonine. Residues 112 to 122 (LEPKYRVREQE) show a composition bias toward basic and acidic residues. A phosphoserine mark is found at Ser-123, Ser-124, Ser-129, and Ser-132. Residues 123–132 (SSGDEDSDLS) show a composition bias toward acidic residues. A compositionally biased stretch (basic and acidic residues) spans 133-145 (PEEREKKRQFEMK). Residues 149–152 (HYNE) are required for binding PPP1CC catalytic center, displacing metal ions and inhibition of PPP1CC catalytic activity. Positions 165–207 (KDLNDEEEDEEMSETAAGESMNMEESSQGSATSDQLQNKSQSS) are disordered. Residues 168 to 177 (NDEEEDEEMS) show a composition bias toward acidic residues. The span at 187–207 (MEESSQGSATSDQLQNKSQSS) shows a compositional bias: polar residues.

This sequence belongs to the protein phosphatase inhibitor 2 family. As to quaternary structure, heterodimer with PP1. Post-translationally, phosphorylation on Ser-44 by ATM activates PP1 by dissociating the PP1-PPP1R2 complex. Phosphorylation on Thr-73 by GSK3 activates PP1 by dissociating the PP1-PPP1R2 complex.

In terms of biological role, inhibitor of protein-phosphatase 1. This is Protein phosphatase inhibitor 2 (PPP1R2) from Bos taurus (Bovine).